The primary structure comprises 271 residues: Imidazole glycerol phosphate synthase subunit HisF (271 aa).

Catalysis depends on residues aspartate 12 and aspartate 136.

The protein belongs to the HisA/HisF family. In terms of assembly, heterodimer of HisH and HisF.

It localises to the cytoplasm. It catalyses the reaction 5-[(5-phospho-1-deoxy-D-ribulos-1-ylimino)methylamino]-1-(5-phospho-beta-D-ribosyl)imidazole-4-carboxamide + L-glutamine = D-erythro-1-(imidazol-4-yl)glycerol 3-phosphate + 5-amino-1-(5-phospho-beta-D-ribosyl)imidazole-4-carboxamide + L-glutamate + H(+). It participates in amino-acid biosynthesis; L-histidine biosynthesis; L-histidine from 5-phospho-alpha-D-ribose 1-diphosphate: step 5/9. IGPS catalyzes the conversion of PRFAR and glutamine to IGP, AICAR and glutamate. The HisF subunit catalyzes the cyclization activity that produces IGP and AICAR from PRFAR using the ammonia provided by the HisH subunit. This chain is Imidazole glycerol phosphate synthase subunit HisF, found in Haloarcula marismortui (strain ATCC 43049 / DSM 3752 / JCM 8966 / VKM B-1809) (Halobacterium marismortui).